The following is a 1719-amino-acid chain: Serine/threonine-protein kinase MRCK alpha (1719 aa).

Residues 77 to 343 (FEILKVIGRG…IEDFKKHPFF (267 aa)) form the Protein kinase domain. Residues 83-91 (IGRGAFGEV) and lysine 106 each bind ATP. Aspartate 201 acts as the Proton acceptor in catalysis. 2 positions are modified to phosphoserine; by autocatalysis: serine 222 and serine 234. Threonine 240 carries the post-translational modification Phosphothreonine; by autocatalysis. The 71-residue stretch at 344-414 (SGIDWDNIRN…TSSCVLSDRS (71 aa)) folds into the AGC-kinase C-terminal domain. Coiled-coil stretches lie at residues 437 to 670 (NNLA…KQKQ), 713 to 820 (SEIK…WEAQ), and 880 to 943 (LELQ…SEKG). Residues 999 to 1049 (THQFFVKSFTAPTKCHQCTSLMVGLIRQGCSCEVCGFSCHITCVNKAPTVC) form a Phorbol-ester/DAG-type zinc finger. The region spanning 1069-1188 (GTAYEGHVRI…WVGVLSELHK (120 aa)) is the PH domain. One can recognise a CNH domain in the interval 1214–1486 (IKTTQAAAII…RPLNTEGSLN (273 aa)). Serine 1532 is modified (phosphoserine). A CRIB domain is found at 1558–1571 (ISNPTNFNHIAHMG). Positions 1579–1719 (LKDLPMNPRP…ESTDRGSWDP (141 aa)) are disordered. Positions 1591–1606 (SRTVFSGSVSIPSITK) are enriched in polar residues. 9 positions are modified to phosphoserine: serine 1598, serine 1600, serine 1616, serine 1638, serine 1651, serine 1656, serine 1680, serine 1706, and serine 1708. Over residues 1612 to 1627 (GRSMSASSGLSARSSA) the composition is skewed to low complexity. Low complexity predominate over residues 1652 to 1661 (PSEGSLSSGG).

The protein belongs to the protein kinase superfamily. AGC Ser/Thr protein kinase family. DMPK subfamily. As to quaternary structure, homodimer and homotetramer via the coiled coil regions. Interacts tightly with GTP-bound but not GDP-bound CDC42. Forms a tripartite complex with MYO18A and LRP35A with the latter acting as an adapter connecting CDC42BPA and MYO18A. LRP35A binding results in activation of CDC42BPA by abolition of its negative autoregulation. Interacts with LURAP1. Interacts (via AGC-kinase C-terminal domain) with FAM89B/LRAP25 (via LRR repeat). Forms a tripartite complex with FAM89B/LRAP25 and LIMK1. Mg(2+) is required as a cofactor. Post-translationally, proteolytically cleaved by caspases upon apoptosis induction. The cleavage at Asp-478 by CASP3 increases its kinase activity (in vitro).

It localises to the cytoplasm. It is found in the cell projection. The protein resides in the lamellipodium. The enzyme catalyses L-seryl-[protein] + ATP = O-phospho-L-seryl-[protein] + ADP + H(+). It carries out the reaction L-threonyl-[protein] + ATP = O-phospho-L-threonyl-[protein] + ADP + H(+). Maintained in an inactive, closed conformation by an interaction between the kinase domain and the negative autoregulatory C-terminal coiled-coil region. Agonist binding to the phorbol ester binding site disrupts this, releasing the kinase domain to allow N-terminus-mediated dimerization and kinase activation by transautophosphorylation. Inhibited by chelerythrine chloride. Its function is as follows. Serine/threonine-protein kinase which is an important downstream effector of CDC42 and plays a role in the regulation of cytoskeleton reorganization and cell migration. Regulates actin cytoskeletal reorganization via phosphorylation of PPP1R12C and MYL9/MLC2. In concert with MYO18A and LRP35A, is involved in modulating lamellar actomyosin retrograde flow that is crucial to cell protrusion and migration. Phosphorylates: PPP1R12A and LIMK2. May play a role in TFRC-mediated iron uptake. In concert with FAM89B/LRAP25 mediates the targeting of LIMK1 to the lamellipodium resulting in its activation and subsequent phosphorylation of CFL1 which is important for lamellipodial F-actin regulation. Triggers the formation of an extrusion apical actin ring required for epithelial extrusion of apoptotic cells. This chain is Serine/threonine-protein kinase MRCK alpha (Cdc42bpa), found in Mus musculus (Mouse).